Here is a 910-residue protein sequence, read N- to C-terminus: DNA repair and recombination protein RAD54B (910 aa).

A compositionally biased stretch (polar residues) spans 1 to 14; sequence MRRSAAPSQLQGNS. The interval 1–33 is disordered; it reads MRRSAAPSQLQGNSFKKPKFIPPGRSNPGLNEE. Phosphoserine is present on S14. Residues 313–480 form the Helicase ATP-binding domain; it reads GMRMNGRCGA…FALIDFVNPG (168 aa). Position 326-333 (326-333) interacts with ATP; the sequence is DEMGLGKT. The DEGH box motif lies at 431–434; it reads DEGH. In terms of domain architecture, Helicase C-terminal spans 649-810; sequence KLLAVIHELR…HIQFSVEELK (162 aa).

The protein belongs to the SNF2/RAD54 helicase family. As to quaternary structure, interacts with RAD51 through the NH2-terminal domain. Immunoprecipitation experiments show that the interaction is constitutive and not induced by ionizing radiation. The interaction may be indirect. Abundantly expressed in testis and spleen. Relatively low levels observed in thymus, prostate, ovary and colon.

It is found in the nucleus. Involved in DNA repair and mitotic recombination. May play an active role in recombination processes in concert with other members of the RAD52 epistasis group. This chain is DNA repair and recombination protein RAD54B (RAD54B), found in Homo sapiens (Human).